The primary structure comprises 484 residues: Glutamate--tRNA ligase (484 aa).

Residues 11–21 carry the 'HIGH' region motif; sequence PSPTGYLHIGN. A 'KMSKS' region motif is present at residues 252 to 256; the sequence is KLSKR. Lys-255 serves as a coordination point for ATP.

This sequence belongs to the class-I aminoacyl-tRNA synthetase family. Glutamate--tRNA ligase type 1 subfamily. Monomer.

The protein resides in the cytoplasm. It carries out the reaction tRNA(Glu) + L-glutamate + ATP = L-glutamyl-tRNA(Glu) + AMP + diphosphate. Functionally, catalyzes the attachment of glutamate to tRNA(Glu) in a two-step reaction: glutamate is first activated by ATP to form Glu-AMP and then transferred to the acceptor end of tRNA(Glu). In Staphylococcus haemolyticus (strain JCSC1435), this protein is Glutamate--tRNA ligase.